The primary structure comprises 263 residues: 4-hydroxy-tetrahydrodipicolinate reductase (263 aa).

NAD(+)-binding positions include glycine 7–methionine 12, glycine 96–threonine 98, and alanine 122–phenylalanine 125. The active-site Proton donor/acceptor is histidine 152. Histidine 153 is a (S)-2,3,4,5-tetrahydrodipicolinate binding site. The Proton donor role is filled by lysine 156. Glycine 162–threonine 163 is a binding site for (S)-2,3,4,5-tetrahydrodipicolinate.

The protein belongs to the DapB family.

It localises to the cytoplasm. The enzyme catalyses (S)-2,3,4,5-tetrahydrodipicolinate + NAD(+) + H2O = (2S,4S)-4-hydroxy-2,3,4,5-tetrahydrodipicolinate + NADH + H(+). It carries out the reaction (S)-2,3,4,5-tetrahydrodipicolinate + NADP(+) + H2O = (2S,4S)-4-hydroxy-2,3,4,5-tetrahydrodipicolinate + NADPH + H(+). It participates in amino-acid biosynthesis; L-lysine biosynthesis via DAP pathway; (S)-tetrahydrodipicolinate from L-aspartate: step 4/4. Its function is as follows. Catalyzes the conversion of 4-hydroxy-tetrahydrodipicolinate (HTPA) to tetrahydrodipicolinate. The polypeptide is 4-hydroxy-tetrahydrodipicolinate reductase (Listeria innocua serovar 6a (strain ATCC BAA-680 / CLIP 11262)).